The sequence spans 100 residues: Aspartyl/glutamyl-tRNA(Asn/Gln) amidotransferase subunit C (100 aa).

This sequence belongs to the GatC family. In terms of assembly, heterotrimer of A, B and C subunits.

It carries out the reaction L-glutamyl-tRNA(Gln) + L-glutamine + ATP + H2O = L-glutaminyl-tRNA(Gln) + L-glutamate + ADP + phosphate + H(+). The catalysed reaction is L-aspartyl-tRNA(Asn) + L-glutamine + ATP + H2O = L-asparaginyl-tRNA(Asn) + L-glutamate + ADP + phosphate + 2 H(+). Functionally, allows the formation of correctly charged Asn-tRNA(Asn) or Gln-tRNA(Gln) through the transamidation of misacylated Asp-tRNA(Asn) or Glu-tRNA(Gln) in organisms which lack either or both of asparaginyl-tRNA or glutaminyl-tRNA synthetases. The reaction takes place in the presence of glutamine and ATP through an activated phospho-Asp-tRNA(Asn) or phospho-Glu-tRNA(Gln). The sequence is that of Aspartyl/glutamyl-tRNA(Asn/Gln) amidotransferase subunit C from Streptococcus equi subsp. zooepidemicus (strain MGCS10565).